The chain runs to 750 residues: Penicillin-binding protein 2x (750 aa).

The helical transmembrane segment at 29–49 (LSLLSVFVFAIFLVNFAVIIG) threads the bilayer. The active-site Acyl-ester intermediate is the Ser337. 2 consecutive PASTA domains span residues 632–691 (QQSP…ILSD) and 692–750 (KAEE…TLGD).

Belongs to the transpeptidase family.

Its subcellular location is the cell membrane. A transpeptidase that forms peptide cross-links between adjacent glycan strands in cell wall peptidoglycan (PG). Part of the divisome machinery that synthesizes the septal cross wall. Beta-lactams inactivate the PBPs by acylating an essential serine residue in the active site of these proteins. In Streptococcus pneumoniae serotype 4 (strain ATCC BAA-334 / TIGR4), this protein is Penicillin-binding protein 2x (pbpX).